We begin with the raw amino-acid sequence, 271 residues long: Cytochrome b termination protein 1 (271 aa).

The protein resides in the mitochondrion. In terms of biological role, involved in 5'-end processing of mitochondrial COB, 15S rRNA, and RPM1 transcript. May also have a role in 3'-end processing of the COB pre-mRNA. This is Cytochrome b termination protein 1 (CBT1) from Saccharomyces cerevisiae (strain ATCC 204508 / S288c) (Baker's yeast).